The chain runs to 400 residues: Tryptophan 2,3-dioxygenase (400 aa).

Substrate is bound by residues 75–79 (FIIIH) and R146. H332 contributes to the heme binding site. T346 lines the substrate pocket.

Belongs to the tryptophan 2,3-dioxygenase family. In terms of assembly, homotetramer. Dimer of dimers. It depends on heme as a cofactor.

The enzyme catalyses L-tryptophan + O2 = N-formyl-L-kynurenine. It functions in the pathway amino-acid degradation; L-tryptophan degradation via kynurenine pathway; L-kynurenine from L-tryptophan: step 1/2. In terms of biological role, heme-dependent dioxygenase that catalyzes the oxidative cleavage of the L-tryptophan (L-Trp) pyrrole ring and converts L-tryptophan to N-formyl-L-kynurenine. Catalyzes the oxidative cleavage of the indole moiety. This Dictyostelium discoideum (Social amoeba) protein is Tryptophan 2,3-dioxygenase.